A 957-amino-acid polypeptide reads, in one-letter code: Receptor-like protein 53 (957 aa).

An N-terminal signal peptide occupies residues 1–30; it reads MEGFWNSKSIIRITLSFIFLFICHFLDVLA. Over 31-910 the chain is Extracellular; that stretch reads APTRNLCRPE…EEEDEDLISW (880 aa). Asn-78, Asn-114, Asn-143, Asn-167, and Asn-191 each carry an N-linked (GlcNAc...) asparagine glycan. LRR repeat units follow at residues 120 to 143, 144 to 170, 172 to 192, 193 to 216, 217 to 240, 241 to 266, 268 to 287, 288 to 312, 313 to 336, 338 to 360, 361 to 384, and 386 to 409; these read LHFL…SIEN, LSHL…NLSR, TYLN…ICNL, SHLT…IGGL, SHLT…IGNL, SNLT…NLSQ, TFLG…SFGN, LNQL…LLNL, TGLS…ITSL, NLMD…LFTI, PSLT…NISS, and SNLY…ISKL. N-linked (GlcNAc...) asparagine glycans are attached at residues Asn-239, Asn-242, Asn-252, and Asn-263. N-linked (GlcNAc...) asparagine glycans are attached at residues Asn-311 and Asn-332. N-linked (GlcNAc...) asparagine glycosylation is present at Asn-381. An LRR 13; degenerate repeat occupies 412–433; the sequence is LFRLDISHLNTQGPVDFSIFSH. LRR repeat units lie at residues 434 to 458, 460 to 483, 486 to 509, 510 to 533, 535 to 556, 558 to 580, 581 to 604, 605 to 629, 631 to 651, 652 to 674, 675 to 697, 698 to 721, 765 to 789, 790 to 813, 814 to 837, and 839 to 862; these read LKSL…YFLS, FKRL…SVSD, SQLI…VRTQ, HELG…LWRL, ILYY…SKPE, SLLY…ICGL, RSLN…MGHL, KSTL…IFEI, RSLD…LSFF, STLE…WLSS, LPKL…EATF, PELR…YFVK, LTIY…IGLL, KELL…MGNL, TALE…LGDL, and FLAY…QFLT. N-linked (GlcNAc...) asparagine glycans are attached at residues Asn-441, Asn-446, and Asn-477. N-linked (GlcNAc...) asparagine glycans are attached at residues Asn-540 and Asn-543. Asn-594 is a glycosylation site (N-linked (GlcNAc...) asparagine). The N-linked (GlcNAc...) asparagine glycan is linked to Asn-665. An N-linked (GlcNAc...) asparagine glycan is attached at Asn-711. Asn-812 carries an N-linked (GlcNAc...) asparagine glycan. N-linked (GlcNAc...) asparagine glycosylation is found at Asn-844 and Asn-864. Residues 911 to 931 traverse the membrane as a helical segment; it reads IAAAIGFGPGIAFGLMFGYIL. At 932–957 the chain is on the cytoplasmic side; sequence VSYKPEWFMNPFDRNNRRQKRHKTTH.

It belongs to the RLP family.

Its subcellular location is the cell membrane. In Arabidopsis thaliana (Mouse-ear cress), this protein is Receptor-like protein 53.